Here is a 226-residue protein sequence, read N- to C-terminus: ATP synthase F(0) complex subunit a (226 aa).

A run of 6 helical transmembrane segments spans residues 9 to 29, 68 to 88, 97 to 117, 138 to 158, 164 to 184, and 201 to 223; these read FITPTMMGLPIVILVIVFPAM, WALMLISLILFIGSTNLLGLV, QLSMNLGMAIPLWAGAVITGF, IPMLVVIETISLFIQPMALAI, ITAGHLLMHLIGGAVLALTSI, and ILEFAVALIQAYVFTLLVSLYLH.

It belongs to the ATPase A chain family. Component of the ATP synthase complex composed at least of ATP5F1A/subunit alpha, ATP5F1B/subunit beta, ATP5MC1/subunit c (homooctomer), MT-ATP6/subunit a, MT-ATP8/subunit 8, ATP5ME/subunit e, ATP5MF/subunit f, ATP5MG/subunit g, ATP5MK/subunit k, ATP5MJ/subunit j, ATP5F1C/subunit gamma, ATP5F1D/subunit delta, ATP5F1E/subunit epsilon, ATP5PF/subunit F6, ATP5PB/subunit b, ATP5PD/subunit d, ATP5PO/subunit OSCP. ATP synthase complex consists of a soluble F(1) head domain (subunits alpha(3) and beta(3)) - the catalytic core - and a membrane F(0) domain - the membrane proton channel (subunits c, a, 8, e, f, g, k and j). These two domains are linked by a central stalk (subunits gamma, delta, and epsilon) rotating inside the F1 region and a stationary peripheral stalk (subunits F6, b, d, and OSCP). Interacts with DNAJC30; interaction is direct.

The protein resides in the mitochondrion inner membrane. The catalysed reaction is H(+)(in) = H(+)(out). Its function is as follows. Subunit a, of the mitochondrial membrane ATP synthase complex (F(1)F(0) ATP synthase or Complex V) that produces ATP from ADP in the presence of a proton gradient across the membrane which is generated by electron transport complexes of the respiratory chain. ATP synthase complex consist of a soluble F(1) head domain - the catalytic core - and a membrane F(1) domain - the membrane proton channel. These two domains are linked by a central stalk rotating inside the F(1) region and a stationary peripheral stalk. During catalysis, ATP synthesis in the catalytic domain of F(1) is coupled via a rotary mechanism of the central stalk subunits to proton translocation. With the subunit c (ATP5MC1), forms the proton-conducting channel in the F(0) domain, that contains two crucial half-channels (inlet and outlet) that facilitate proton movement from the mitochondrial intermembrane space (IMS) into the matrix. Protons are taken up via the inlet half-channel and released through the outlet half-channel, following a Grotthuss mechanism. The chain is ATP synthase F(0) complex subunit a from Dugong dugon (Dugong).